Consider the following 907-residue polypeptide: Coatomer subunit beta'-1 (907 aa).

WD repeat units follow at residues 13–52, 55–94, 97–136, 140–180, 183–224, 227–266, 269–309, 351–389, and 461–501; these read QRSE…MVKS, VSEL…KVKV, AHTD…MCTQ, GHSH…PNFT, GHQK…CVQT, GHTH…LENT, YGLE…ASMD, SCDL…NRSF, and RIDV…SYLE. Acidic residues-rich tracts occupy residues 850-866 and 874-887; these read ETED…EEVL and STDE…DEPE. The segment at 850-887 is disordered; the sequence is ETEDALDENGEPDEEVLEENKVEESTDEAVEVDADEPE.

Belongs to the WD repeat COPB2 family. Oligomeric complex that consists of at least the alpha, beta, beta', gamma, delta, epsilon and zeta subunits.

The protein resides in the cytoplasm. It localises to the golgi apparatus membrane. Its subcellular location is the cytoplasmic vesicle. The protein localises to the COPI-coated vesicle membrane. Its function is as follows. The coatomer is a cytosolic protein complex that binds to dilysine motifs and reversibly associates with Golgi non-clathrin-coated vesicles, which further mediate biosynthetic protein transport from the ER, via the Golgi up to the trans Golgi network. Coatomer complex is required for budding from Golgi membranes, and is essential for the retrograde Golgi-to-ER transport of dilysine-tagged proteins. The protein is Coatomer subunit beta'-1 of Oryza sativa subsp. japonica (Rice).